We begin with the raw amino-acid sequence, 187 residues long: Prepilin peptidase-dependent protein B (187 aa).

Residues 1-7 (MPVKEQG) constitute a propeptide, leader sequence. Position 8 is an N-methylphenylalanine (phenylalanine 8). Residues 8-28 (FSLLEVLIAMAISSVLLLGAA) traverse the membrane as a helical segment.

The protein resides in the membrane. Functionally, not yet known. The protein is Prepilin peptidase-dependent protein B (ppdB) of Escherichia coli (strain K12).